A 1240-amino-acid chain; its full sequence is Ubiquitin carboxyl-terminal hydrolase 36 (1240 aa).

Disordered regions lie at residues 37–56 and 100–144; these read AKTS…STDN and SNGG…GTSA. Composition is skewed to low complexity over residues 47–56 and 101–132; these read SSTSGSSTDN and NGGA…DNNG. The 311-residue stretch at 202–512 folds into the USP domain; that stretch reads TGMLNVGNTC…NAYIMFYELD (311 aa). The active-site Nucleophile is cysteine 211. The Proton acceptor role is filled by histidine 471. The disordered stretch occupies residues 637–705; it reads ANKSSCNTLN…KMFEESSESV (69 aa). Residues 639 to 649 are compositionally biased toward polar residues; it reads KSSCNTLNNSK. The span at 650-662 shows a compositional bias: low complexity; it reads QHQPQQQQQQPQH. The segment covering 668–680 has biased composition (acidic residues); the sequence is SDEEEDSDDDNDN. Threonine 715 bears the Phosphothreonine mark. Disordered stretches follow at residues 723 to 818, 831 to 998, 1076 to 1163, and 1198 to 1240; these read YESA…KQKT, YKNK…GESL, DMSS…EYES, and RFAG…QQQS. Phosphoserine occurs at positions 725 and 727. Residues 733–744 show a composition bias toward low complexity; the sequence is QQQQQQQTLQQQ. Acidic residues predominate over residues 759–769; that stretch reads SDTDDDDDEEQ. Residues 794 to 815 are compositionally biased toward low complexity; that stretch reads NSSSSKTKSASNASSANVNSSK. The segment covering 843–859 has biased composition (acidic residues); the sequence is DDDDDDDEDEDEDEDEA. Residues 869-879 show a composition bias toward low complexity; it reads TKSSSSSSSTS. Residues 880-890 show a composition bias toward polar residues; the sequence is LTNGWQQSQNG. Serine 895 is modified (phosphoserine). Position 898 is a phosphothreonine (threonine 898). Serine 901 carries the phosphoserine modification. Over residues 918–941 the composition is skewed to acidic residues; it reads DEDDDENVDGVADADDDDDNDEVA. Polar residues predominate over residues 976-988; the sequence is LNGSSKSQQTTPR. Low complexity predominate over residues 1076 to 1103; the sequence is DMSSSSSSSSSTNSSSNSSSRSNGNSSN. Basic and acidic residues predominate over residues 1111 to 1120; sequence AEAREQRKRD. The span at 1231–1240 shows a compositional bias: low complexity; sequence QSSGQQQQQS.

This sequence belongs to the peptidase C19 family. As to quaternary structure, interacts with atms/PAF1, but not with CycT.

The protein localises to the nucleus. It localises to the nucleolus. The enzyme catalyses Thiol-dependent hydrolysis of ester, thioester, amide, peptide and isopeptide bonds formed by the C-terminal Gly of ubiquitin (a 76-residue protein attached to proteins as an intracellular targeting signal).. Required for maintaining multiple types of adult stem cells, including male and female germline, epithelial follicle cell and intestinal stem cells. May function as a transcriptional repressor by continually deubiquiting histone H2B at the promoters of genes critical for cellular differentiation, thereby preventing histone H3 'Lys-4' trimethylation (H3K4). Controls selective autophagy activation by ubiquitinated proteins. This chain is Ubiquitin carboxyl-terminal hydrolase 36 (Usp36), found in Drosophila grimshawi (Hawaiian fruit fly).